The chain runs to 347 residues: 5-formaminoimidazole-4-carboxamide-1-(beta)-D-ribofuranosyl 5'-monophosphate synthetase (347 aa).

5-amino-1-(5-phospho-beta-D-ribosyl)imidazole-4-carboxamide-binding residues include His-23 and Ser-91. Residues Arg-112–Met-323 enclose the ATP-grasp domain. ATP contacts are provided by residues Pro-142–Tyr-196 and Glu-218. Residue Asn-244 participates in 5-amino-1-(5-phospho-beta-D-ribosyl)imidazole-4-carboxamide binding. Mg(2+) contacts are provided by Glu-283 and Glu-296.

Belongs to the phosphohexose mutase family. The cofactor is Mg(2+). Mn(2+) serves as cofactor.

The enzyme catalyses 5-amino-1-(5-phospho-beta-D-ribosyl)imidazole-4-carboxamide + formate + ATP = 5-formamido-1-(5-phospho-D-ribosyl)imidazole-4-carboxamide + ADP + phosphate. It participates in purine metabolism; IMP biosynthesis via de novo pathway; 5-formamido-1-(5-phospho-D-ribosyl)imidazole-4-carboxamide from 5-amino-1-(5-phospho-D-ribosyl)imidazole-4-carboxamide (formate route): step 1/1. In terms of biological role, catalyzes the ATP- and formate-dependent formylation of 5-aminoimidazole-4-carboxamide-1-beta-d-ribofuranosyl 5'-monophosphate (AICAR) to 5-formaminoimidazole-4-carboxamide-1-beta-d-ribofuranosyl 5'-monophosphate (FAICAR) in the absence of folates. The chain is 5-formaminoimidazole-4-carboxamide-1-(beta)-D-ribofuranosyl 5'-monophosphate synthetase from Ignicoccus hospitalis (strain KIN4/I / DSM 18386 / JCM 14125).